The chain runs to 371 residues: DNA-directed RNA polymerase subunit alpha (371 aa).

The alpha N-terminal domain (alpha-NTD) stretch occupies residues 1–248 (MSVKYGKFEM…KHFEVFNQFN (248 aa)). An alpha C-terminal domain (alpha-CTD) region spans residues 264–371 (DQDELMDKLS…KELVKHEDAK (108 aa)).

Belongs to the RNA polymerase alpha chain family. As to quaternary structure, homodimer. The RNAP catalytic core consists of 2 alpha, 1 beta, 1 beta' and 1 omega subunit. When a sigma factor is associated with the core the holoenzyme is formed, which can initiate transcription.

It carries out the reaction RNA(n) + a ribonucleoside 5'-triphosphate = RNA(n+1) + diphosphate. In terms of biological role, DNA-dependent RNA polymerase catalyzes the transcription of DNA into RNA using the four ribonucleoside triphosphates as substrates. In Protochlamydia amoebophila (strain UWE25), this protein is DNA-directed RNA polymerase subunit alpha.